The primary structure comprises 169 residues: Peptide deformylase (169 aa).

Cysteine 91 and histidine 133 together coordinate Fe cation. The active site involves glutamate 134. A Fe cation-binding site is contributed by histidine 137.

This sequence belongs to the polypeptide deformylase family. The cofactor is Fe(2+).

The catalysed reaction is N-terminal N-formyl-L-methionyl-[peptide] + H2O = N-terminal L-methionyl-[peptide] + formate. In terms of biological role, removes the formyl group from the N-terminal Met of newly synthesized proteins. Requires at least a dipeptide for an efficient rate of reaction. N-terminal L-methionine is a prerequisite for activity but the enzyme has broad specificity at other positions. This Serratia proteamaculans (strain 568) protein is Peptide deformylase.